The primary structure comprises 1034 residues: MEADGAGEQMRPLLTRGPDEEAVVDLGKTSSTVNTKFEKEELESHRAVYVGVHVPFSKESRRRHKHRGHKHHHRRRKDKDSDKEDGRESPSYDTPSQRVQFILGTEDDDEEHIPHDLFTEMDELCYRDGEEYEWKETARWLKFEEDVEDGGDRWSKPYVATLSLHSLFELRSCILNGTVMLDMRASTLDEIADMVLDNMIASGQLDDSIRENVREALLKRHHHQNEKRFTSRIPLVRSFADIGILASPQSAPGNLDNSKSGEMKGNGSGGSRENSTVDFSKVDMNFMRKIPTGAEASNVLVGEVDFLERPIIAFVRLAPAVLLSGLTEVPVPTRFLFLLLGPAGKAPQYHEIGRSIATLMTDEIFHDVAYKAKDRNDLLSGIDEFLDQVTVLPPGEWDPSIRIEPPKSVPSQEKRKIPVFPNGSAAMSVGPPKEDDHHAGPELQRTGRLFGGLILDIKRKAPFFLSDFKDALSLQCLASILFLYCACMSPVITFGGLLGEATEGRISAIESLFGASLTGIAYSLFAGQPLTILGSTGPVLVFEKILFKFCRDYHLSYLSLRTSIGLWTSFLCIVLVATDASSLVCYITRFTEEAFAALICIIFIYEALEKLFHLGEIYAFNMHNNLDELTSYTCVCAEPSNPSNETLELWKRKNITAYSVSWGNLTVSECKTFHGMFVGSACGPHGPYVPDVLFWCVVLFFTTFFLSSFLKQFKTKGYFPTKVRSTISDFAVFLTIVIMVAIDYLVGIPSPKLHVPEKFEPTDPSRGWIISPLGDNPWWTLLIAAVPALLCTILIFMDQQITAVIINRKEHKLKFIPMPVLYGVFLYMGVSSLKGIQFFDRIKLFGMPAKHQPDLIYLRYVPLWKVHVFTVVQLTCLVLLWVIKASAAAVVFPMMVLALVFVRKLMDLCFTKRELSWLDDLMPESKKKKEDDKKKKEKEEAERMLQDDEDTVHLPFERGSLLQIPVKTLKYSIDPSVVNISDEMAKTAQWKALSMNTENAKVTRPNTSPEKPVSVTINFEDEPSKKYMDAETSL.

Disordered stretches follow at residues 1–31 (MEADGAGEQMRPLLTRGPDEEAVVDLGKTSS) and 53–99 (HVPF…SQRV). Residues 1-476 (MEADGAGEQM…DFKDALSLQC (476 aa)) lie on the Extracellular side of the membrane. Phosphoserine occurs at positions 57, 60, 89, and 155. The segment covering 60 to 77 (SRRRHKHRGHKHHHRRRK) has biased composition (basic residues). The span at 78 to 90 (DKDSDKEDGRESP) shows a compositional bias: basic and acidic residues. N176 carries N-linked (GlcNAc...) asparagine glycosylation. A phosphoserine mark is found at S238, S250, S260, M263, S268, and S271. The segment covering 250 to 260 (SAPGNLDNSKS) has biased composition (polar residues). The disordered stretch occupies residues 250 to 276 (SAPGNLDNSKSGEMKGNGSGGSRENST). Residue N274 is glycosylated (N-linked (GlcNAc...) asparagine). Phosphoserine occurs at positions 275 and 424. Residues 477-497 (LASILFLYCACMSPVITFGGL) form a helical membrane-spanning segment. Over 498–505 (LGEATEGR) the chain is Cytoplasmic. The chain crosses the membrane as a helical span at residues 506 to 526 (ISAIESLFGASLTGIAYSLFA). The Extracellular segment spans residues 527–563 (GQPLTILGSTGPVLVFEKILFKFCRDYHLSYLSLRTS). A helical transmembrane segment spans residues 564-584 (IGLWTSFLCIVLVATDASSLV). Residues 585–593 (CYITRFTEE) lie on the Cytoplasmic side of the membrane. A helical membrane pass occupies residues 594–614 (AFAALICIIFIYEALEKLFHL). Topologically, residues 615-685 (GEIYAFNMHN…MFVGSACGPH (71 aa)) are extracellular. An intrachain disulfide couples C634 to C636. Residues N644, N654, and N664 are each glycosylated (N-linked (GlcNAc...) asparagine). Residues C670 and C682 are joined by a disulfide bond. A helical membrane pass occupies residues 686-706 (GPYVPDVLFWCVVLFFTTFFL). The Cytoplasmic portion of the chain corresponds to 707–729 (SSFLKQFKTKGYFPTKVRSTISD). A helical transmembrane segment spans residues 730-750 (FAVFLTIVIMVAIDYLVGIPS). At 751-776 (PKLHVPEKFEPTDPSRGWIISPLGDN) the chain is on the extracellular side. The helical transmembrane segment at 777–797 (PWWTLLIAAVPALLCTILIFM) threads the bilayer. The Cytoplasmic portion of the chain corresponds to 798–812 (DQQITAVIINRKEHK). Residues 813 to 833 (LKFIPMPVLYGVFLYMGVSSL) traverse the membrane as a helical segment. The interval 815–915 (FIPMPVLYGV…MDLCFTKREL (101 aa)) is essential for cell membrane localization and transport activity. Residues 834-876 (KGIQFFDRIKLFGMPAKHQPDLIYLRYVPLWKVHVFTVVQLTC) lie on the Extracellular side of the membrane. The chain crosses the membrane as a helical span at residues 877–897 (LVLLWVIKASAAAVVFPMMVL). The Cytoplasmic portion of the chain corresponds to 898 to 1034 (ALVFVRKLMD…KKYMDAETSL (137 aa)). The interval 918–920 (LDD) is CA2-binding. The segment at 926–946 (KKKKEDDKKKKEKEEAERMLQ) is disordered. T951 carries the post-translational modification Phosphothreonine. Residues S960 and S1033 each carry the phosphoserine modification. Positions 1031–1034 (ETSL) match the PDZ-binding motif.

It belongs to the anion exchanger (TC 2.A.31) family. As to quaternary structure, forms a complex with ATP6V1B1 and NHERF1/EBP50. Interacts in a pH dependent-manner with CA2/carbonic anhydrase 2. Interacts with CFTR through NHERF1/EBP50. Interacts with USH1C. Expressed in the spiral ligament throughout the cochlea and in photoreceptors of the outer plexiform layer of the retina (at protein level).

The protein localises to the basolateral cell membrane. It is found in the apical cell membrane. It localises to the cell projection. Its subcellular location is the stereocilium. The protein resides in the cell membrane. It catalyses the reaction hydrogencarbonate(in) + Na(+)(in) = hydrogencarbonate(out) + Na(+)(out). Activity is inhibited by 4,4'-di-isothiocyanatostilbene-2,2'-disulfonic acid (DIDS - an inhibitor of several anion channels and transporters). Electroneutral sodium- and bicarbonate-dependent cotransporter with a Na(+):HCO3(-) 1:1 stoichiometry. Mediates the sodium-dependent bicarbonate transport important for pH recovery after acid load as well as for regulation of steady-state pH in the duodenum and vascular smooth muscle cells. Plays a key role in macrophage acidification, mediating bicarbonate import into the cytoplasm which is crucial for net acid extrusion and maintenance of cytoplasmic pH during phagocytosis. Provides cellular bicarbonate for de novo purine and pyrimidine synthesis and is a key mediator of de novo nucleotide synthesis downstream of mTORC1 signaling in proliferating cells. May be involved in maintaining locomotor activity, exploratory behavior, and hearing. The sequence is that of Sodium bicarbonate cotransporter 3 (Slc4a7) from Mus musculus (Mouse).